The sequence spans 179 residues: MAATEPILAATGSPAAVPPEKPEGAGSSSDPECNCVGSSLPEASPPAPEPSSLNVAVPEAIPTPQAAASAAPELPLGPAPVSVAPQAEAEARSTPGPAGSRLGPETFRQRFRQFRYQDAAGPREAFRQLRELSRQWLRPDIRTKEQIVEMLVQEQLLAILPEAARARRIRRRTDVRITG.

The segment at 1-108 (MAATEPILAA…GSRLGPETFR (108 aa)) is disordered. Low complexity predominate over residues 60–80 (AIPTPQAAASAAPELPLGPAP). Residues 108–166 (RQRFRQFRYQDAAGPREAFRQLRELSRQWLRPDIRTKEQIVEMLVQEQLLAILPEAARA) form the SCAN box domain.

In terms of assembly, interacts with ZNF202.

It localises to the nucleus. Functionally, may regulate transcriptional activity. This is SCAN domain-containing protein 1 (SCAND1) from Pongo pygmaeus (Bornean orangutan).